A 195-amino-acid chain; its full sequence is Thymidine kinase (195 aa).

ATP contacts are provided by residues Ala-9–Ser-16 and Asp-89–Gln-92. Catalysis depends on Glu-90, which acts as the Proton acceptor. Zn(2+) contacts are provided by Cys-147, Cys-149, Cys-184, and His-187.

Belongs to the thymidine kinase family. In terms of assembly, homotetramer.

The protein resides in the cytoplasm. It catalyses the reaction thymidine + ATP = dTMP + ADP + H(+). The protein is Thymidine kinase of Rhizobium meliloti (strain 1021) (Ensifer meliloti).